We begin with the raw amino-acid sequence, 1238 residues long: ATP-dependent helicase/nuclease subunit A (1238 aa).

Residues 12 to 490 form the UvrD-like helicase ATP-binding domain; the sequence is VSWTDDQWKA…IDLNANFRSR (479 aa). 33–40 contacts ATP; the sequence is AAAGSGKT. The region spanning 510-818 is the UvrD-like helicase C-terminal domain; it reads GEILYDDNAS…RLVTIHSSKG (309 aa).

It belongs to the helicase family. AddA subfamily. In terms of assembly, heterodimer of AddA and AddB/RexB. Requires Mg(2+) as cofactor.

The enzyme catalyses Couples ATP hydrolysis with the unwinding of duplex DNA by translocating in the 3'-5' direction.. It carries out the reaction ATP + H2O = ADP + phosphate + H(+). Functionally, the heterodimer acts as both an ATP-dependent DNA helicase and an ATP-dependent, dual-direction single-stranded exonuclease. Recognizes the chi site generating a DNA molecule suitable for the initiation of homologous recombination. The AddA nuclease domain is required for chi fragment generation; this subunit has the helicase and 3' -&gt; 5' nuclease activities. This is ATP-dependent helicase/nuclease subunit A from Lysinibacillus sphaericus (strain C3-41).